Reading from the N-terminus, the 931-residue chain is Protein phosphatase 1 regulatory subunit 37 homolog (931 aa).

The disordered stretch occupies residues 20–71; sequence TAASSPASPIPPTSPSMFATPPHQQSHSSATSVRKKVCQEANSSADDPDSDA. The segment covering 41-51 has biased composition (polar residues); that stretch reads PHQQSHSSATS. LRR repeat units lie at residues 232 to 259, 262 to 285, 290 to 314, 323 to 346, 351 to 374, 379 to 407, 409 to 430, and 435 to 458; these read AISL…LARA, SASL…VLIC, NTGI…IYQL, LLDL…LRNR, KSAL…SLAE, NTKI…LVSN, HLHR…ILAE, and NTAL…ALHS. A compositionally biased stretch (basic and acidic residues) spans 519 to 533; sequence QDHVSEDTEKENKDA. Disordered regions lie at residues 519–602 and 780–807; these read QDHV…RHQR and PDCT…IRQR. Positions 534 to 547 are enriched in acidic residues; the sequence is DNDDKEPENEDGDT. The segment covering 554-563 has biased composition (low complexity); the sequence is SDASADQSDS. Basic and acidic residues-rich tracts occupy residues 564-584 and 790-807; these read PADK…EKRP and TTSR…IRQR.

This sequence belongs to the PPP1R37 family.

The chain is Protein phosphatase 1 regulatory subunit 37 homolog from Caenorhabditis briggsae.